Reading from the N-terminus, the 294-residue chain is ATP synthase gamma chain (294 aa).

The protein belongs to the ATPase gamma chain family. In terms of assembly, F-type ATPases have 2 components, CF(1) - the catalytic core - and CF(0) - the membrane proton channel. CF(1) has five subunits: alpha(3), beta(3), gamma(1), delta(1), epsilon(1). CF(0) has three main subunits: a, b and c.

It localises to the cell inner membrane. Functionally, produces ATP from ADP in the presence of a proton gradient across the membrane. The gamma chain is believed to be important in regulating ATPase activity and the flow of protons through the CF(0) complex. The protein is ATP synthase gamma chain of Parvibaculum lavamentivorans (strain DS-1 / DSM 13023 / NCIMB 13966).